Consider the following 353-residue polypeptide: Peptide-N(4)-(N-acetyl-beta-glucosaminyl)asparagine amidase (353 aa).

The Zn(2+) site is built by Cys-125, Cys-128, and Cys-159. The active-site Nucleophile is the Cys-185. Catalysis depends on residues His-212 and Asp-229. Glu-232 serves as a coordination point for substrate. A disordered region spans residues 316-353; the sequence is SLEKTKPSKDTSTTTLTGTKGRESGSTAWKQQRGEDGS. Residues 325 to 334 show a composition bias toward low complexity; it reads DTSTTTLTGT.

Belongs to the transglutaminase-like superfamily. PNGase family. Zn(2+) is required as a cofactor.

The protein localises to the cytoplasm. The enzyme catalyses Hydrolysis of an N(4)-(acetyl-beta-D-glucosaminyl)asparagine residue in which the glucosamine residue may be further glycosylated, to yield a (substituted) N-acetyl-beta-D-glucosaminylamine and a peptide containing an aspartate residue.. Its function is as follows. Specifically deglycosylates the denatured form of N-linked glycoproteins in the cytoplasm and assists their proteasome-mediated degradation. Cleaves the beta-aspartyl-glucosamine (GlcNAc) of the glycan and the amide side chain of Asn, converting Asn to Asp. Prefers proteins containing high-mannose over those bearing complex type oligosaccharides. Can recognize misfolded proteins in the endoplasmic reticulum that are exported to the cytosol to be destroyed and deglycosylate them, while it has no activity toward native proteins. Deglycosylation is a prerequisite for subsequent proteasome-mediated degradation of some, but not all, misfolded glycoproteins. The chain is Peptide-N(4)-(N-acetyl-beta-glucosaminyl)asparagine amidase (PNG1) from Kluyveromyces lactis (strain ATCC 8585 / CBS 2359 / DSM 70799 / NBRC 1267 / NRRL Y-1140 / WM37) (Yeast).